A 290-amino-acid polypeptide reads, in one-letter code: Nucleotide-binding protein Aave_3603 (290 aa).

Position 13–20 (13–20 (GMSGSGKS)) interacts with ATP. 62–65 (DVRS) contacts GTP.

Belongs to the RapZ-like family.

Functionally, displays ATPase and GTPase activities. The protein is Nucleotide-binding protein Aave_3603 of Paracidovorax citrulli (strain AAC00-1) (Acidovorax citrulli).